A 186-amino-acid chain; its full sequence is Putative 5'(3')-deoxyribonucleotidase (186 aa).

The Nucleophile role is filled by D6. Mg(2+) is bound by residues D6, D8, and D137. The Proton donor role is filled by D8.

It belongs to the 5'(3')-deoxyribonucleotidase family. Mg(2+) is required as a cofactor.

Dephosphorylates the 5' and 2'(3')-phosphates of deoxyribonucleotides. This Bordetella bronchiseptica (strain ATCC BAA-588 / NCTC 13252 / RB50) (Alcaligenes bronchisepticus) protein is Putative 5'(3')-deoxyribonucleotidase.